We begin with the raw amino-acid sequence, 122 residues long: Large ribosomal subunit protein eL34 (122 aa).

The protein belongs to the eukaryotic ribosomal protein eL34 family. As to quaternary structure, component of the large ribosomal subunit. Mature ribosomes consist of a small (40S) and a large (60S) subunit. The 40S subunit contains about 32 different proteins and 1 molecule of RNA (18S). The 60S subunit contains 45 different proteins and 3 molecules of RNA (25S, 5.8S and 5S).

It localises to the cytoplasm. Its function is as follows. Component of the ribosome, a large ribonucleoprotein complex responsible for the synthesis of proteins in the cell. The small ribosomal subunit (SSU) binds messenger RNAs (mRNAs) and translates the encoded message by selecting cognate aminoacyl-transfer RNA (tRNA) molecules. The large subunit (LSU) contains the ribosomal catalytic site termed the peptidyl transferase center (PTC), which catalyzes the formation of peptide bonds, thereby polymerizing the amino acids delivered by tRNAs into a polypeptide chain. The nascent polypeptides leave the ribosome through a tunnel in the LSU and interact with protein factors that function in enzymatic processing, targeting, and the membrane insertion of nascent chains at the exit of the ribosomal tunnel. This Candida albicans (strain SC5314 / ATCC MYA-2876) (Yeast) protein is Large ribosomal subunit protein eL34.